Consider the following 231-residue polypeptide: A-type ATP synthase subunit D (231 aa).

This sequence belongs to the V-ATPase D subunit family. As to quaternary structure, has multiple subunits with at least A(3), B(3), C, D, E, F, H, I and proteolipid K(x).

The protein localises to the cell membrane. Functionally, component of the A-type ATP synthase that produces ATP from ADP in the presence of a proton gradient across the membrane. The chain is A-type ATP synthase subunit D from Methanobrevibacter smithii (strain ATCC 35061 / DSM 861 / OCM 144 / PS).